We begin with the raw amino-acid sequence, 447 residues long: NADP-specific glutamate dehydrogenase (447 aa).

Substrate-binding residues include K92, Q113, and K116. K128 (proton donor) is an active-site residue. G167 is a substrate binding site. 2 residues coordinate NADP(+): T212 and N243. Residue S379 coordinates substrate.

This sequence belongs to the Glu/Leu/Phe/Val dehydrogenases family. Homohexamer.

It catalyses the reaction L-glutamate + NADP(+) + H2O = 2-oxoglutarate + NH4(+) + NADPH + H(+). Functionally, catalyzes the reversible oxidative deamination of glutamate to alpha-ketoglutarate and ammonia. This chain is NADP-specific glutamate dehydrogenase (gdh), found in Corynebacterium glutamicum (strain ATCC 13032 / DSM 20300 / JCM 1318 / BCRC 11384 / CCUG 27702 / LMG 3730 / NBRC 12168 / NCIMB 10025 / NRRL B-2784 / 534).